Reading from the N-terminus, the 193-residue chain is Protein SINE3 (193 aa).

The interval 15–35 is disordered; sequence SELGAKRLKDPEMKNRKVTTE. A compositionally biased stretch (basic and acidic residues) spans 18–35; that stretch reads GAKRLKDPEMKNRKVTTE. A KASH domain is found at 155–193; the sequence is VTVKFRIVLLSFILWAILAAIVVFFSSGEERAYRGPLPT. A helical membrane pass occupies residues 161-181; that stretch reads IVLLSFILWAILAAIVVFFSS. Positions 190–193 match the Required for nuclear localization motif; the sequence is PLPT.

In terms of assembly, interacts with SUN1 and SUN2.

It is found in the nucleus membrane. This Arabidopsis thaliana (Mouse-ear cress) protein is Protein SINE3.